A 255-amino-acid chain; its full sequence is L-seryl-tRNA(Sec) kinase (255 aa).

Gly7–Ser14 contacts ATP.

The protein belongs to the L-seryl-tRNA(Sec) kinase family.

The catalysed reaction is L-seryl-tRNA(Sec) + ATP = O-phospho-L-seryl-tRNA(Sec) + ADP. It participates in aminoacyl-tRNA biosynthesis; selenocysteinyl-tRNA(Sec) biosynthesis; selenocysteinyl-tRNA(Sec) from L-seryl-tRNA(Sec) (archaeal/eukaryal route): step 1/2. Specifically phosphorylates seryl-tRNA(Sec) to O-phosphoseryl-tRNA(Sec), an activated intermediate for selenocysteine biosynthesis. The sequence is that of L-seryl-tRNA(Sec) kinase (pstK) from Methanococcus maripaludis (strain DSM 14266 / JCM 13030 / NBRC 101832 / S2 / LL).